The chain runs to 361 residues: Biotin synthase (361 aa).

The Radical SAM core domain occupies 47–278; it reads VHGDEVALCG…AAHIFVMGGR (232 aa). The [4Fe-4S] cluster site is built by cysteine 65, cysteine 69, and cysteine 72. Residues serine 110, cysteine 143, and cysteine 203 each coordinate [2Fe-2S] cluster. Positions 323-361 are disordered; it reads TLRPPDTGKPWAFDGHAPSDADWNRKAAEPRPRPLPVVR. The segment covering 339-354 has biased composition (basic and acidic residues); that stretch reads APSDADWNRKAAEPRP.

This sequence belongs to the radical SAM superfamily. Biotin synthase family. In terms of assembly, homodimer. It depends on [4Fe-4S] cluster as a cofactor. [2Fe-2S] cluster serves as cofactor.

It catalyses the reaction (4R,5S)-dethiobiotin + (sulfur carrier)-SH + 2 reduced [2Fe-2S]-[ferredoxin] + 2 S-adenosyl-L-methionine = (sulfur carrier)-H + biotin + 2 5'-deoxyadenosine + 2 L-methionine + 2 oxidized [2Fe-2S]-[ferredoxin]. It participates in cofactor biosynthesis; biotin biosynthesis; biotin from 7,8-diaminononanoate: step 2/2. Functionally, catalyzes the conversion of dethiobiotin (DTB) to biotin by the insertion of a sulfur atom into dethiobiotin via a radical-based mechanism. This Anaeromyxobacter sp. (strain K) protein is Biotin synthase.